The chain runs to 251 residues: 1-(5-phosphoribosyl)-5-[(5-phosphoribosylamino)methylideneamino] imidazole-4-carboxamide isomerase (251 aa).

The active-site Proton acceptor is the Asp-8. Asp-131 (proton donor) is an active-site residue.

It belongs to the HisA/HisF family.

The protein localises to the cytoplasm. It carries out the reaction 1-(5-phospho-beta-D-ribosyl)-5-[(5-phospho-beta-D-ribosylamino)methylideneamino]imidazole-4-carboxamide = 5-[(5-phospho-1-deoxy-D-ribulos-1-ylimino)methylamino]-1-(5-phospho-beta-D-ribosyl)imidazole-4-carboxamide. Its pathway is amino-acid biosynthesis; L-histidine biosynthesis; L-histidine from 5-phospho-alpha-D-ribose 1-diphosphate: step 4/9. This is 1-(5-phosphoribosyl)-5-[(5-phosphoribosylamino)methylideneamino] imidazole-4-carboxamide isomerase from Burkholderia cenocepacia (strain ATCC BAA-245 / DSM 16553 / LMG 16656 / NCTC 13227 / J2315 / CF5610) (Burkholderia cepacia (strain J2315)).